Reading from the N-terminus, the 137-residue chain is Large ribosomal subunit protein uL16 (137 aa).

This sequence belongs to the universal ribosomal protein uL16 family. As to quaternary structure, part of the 50S ribosomal subunit.

Functionally, binds 23S rRNA and is also seen to make contacts with the A and possibly P site tRNAs. The chain is Large ribosomal subunit protein uL16 from Solidesulfovibrio magneticus (strain ATCC 700980 / DSM 13731 / RS-1) (Desulfovibrio magneticus).